The primary structure comprises 1410 residues: ABC transporter C family member 13 (1410 aa).

A run of 8 helical transmembrane segments spans residues 23–43 (IVLG…LTIT), 60–80 (LLYV…VLLV), 88–108 (VILC…ILSL), 122–142 (ILCF…NMIF), 148–168 (QEIC…VLRI), 391–411 (LSGL…SVLI), 474–494 (VFFW…LFAL), and 505–525 (FTCL…PWVI). Positions 255–530 (CNNYSTPSLI…FPWVINGLID (276 aa)) constitute an ABC transmembrane type-1 1 domain. The region spanning 564–791 (VCVEDASCTW…ISPTFSLTNE (228 aa)) is the ABC transporter 1 domain. 602–609 (GEVGSGKT) is a binding site for ATP. 6 helical membrane-spanning segments follow: residues 844 to 864 (AVFS…LMQG), 889 to 909 (TSFY…LTLV), 963 to 985 (SLPF…IVVL), 990 to 1009 (VLFL…LQVF), 1087 to 1107 (IVLF…PISF), and 1111 to 1131 (GLVG…GSLL). The region spanning 852–1139 (TIVILVSAVL…LLTSFTETEK (288 aa)) is the ABC transmembrane type-1 2 domain. The 234-residue stretch at 1174–1407 (VEFHNVTMRY…DSSTFSSFVR (234 aa)) folds into the ABC transporter 2 domain. 1208–1215 (GRTGAGKS) is a binding site for ATP.

This sequence belongs to the ABC transporter superfamily. ABCC family. Conjugate transporter (TC 3.A.1.208) subfamily. In terms of tissue distribution, ubiquitous.

It is found in the membrane. It catalyses the reaction ATP + H2O + xenobioticSide 1 = ADP + phosphate + xenobioticSide 2.. In terms of biological role, pump for glutathione S-conjugates. This chain is ABC transporter C family member 13 (ABCC13), found in Arabidopsis thaliana (Mouse-ear cress).